The chain runs to 222 residues: CEACAM1-like protein UL7 (222 aa).

N-linked (GlcNAc...) asparagine; by host glycans are attached at residues N50, N56, N60, N71, N105, N109, N125, N132, N147, N164, N168, and N189. Residues 193-213 (LALVGVVVFLVLIVVCIMGWW) traverse the membrane as a helical segment.

This sequence belongs to the RL11 family. Highly glycosylated.

The protein localises to the secreted. It is found in the host cell membrane. Functionally, plays a role in modulating the host immune response and affecting host cytokine production. Structurally and functionally homolog of host CEACAM1, induces endothelial cell angiogenesis. The sequence is that of CEACAM1-like protein UL7 (UL7) from Homo sapiens (Human).